The primary structure comprises 242 residues: MIILPAIDLKEGKCVRLYQGDFKASKVVAEDPIEVALKFKENGAEYIHIVDLDGALTGQIKNLSIISSIIKTINIPVELGGGIRNLNTIDMLIDAGIERVILGTAALNNRGLVEKAVKKYDKKIAIGIDAKNEKVAINGWLNISSTNYIDFAKEMEKIGIRNIIFTDISKDGTLKGPNLNQLKKLNESVSCNIIASGGIKDIEDLKVIKEMDIYGAIVGKAIYSGNIDLNEAIKIINKESSR.

Catalysis depends on aspartate 8, which acts as the Proton acceptor. The Proton donor role is filled by aspartate 129.

This sequence belongs to the HisA/HisF family.

It localises to the cytoplasm. It catalyses the reaction 1-(5-phospho-beta-D-ribosyl)-5-[(5-phospho-beta-D-ribosylamino)methylideneamino]imidazole-4-carboxamide = 5-[(5-phospho-1-deoxy-D-ribulos-1-ylimino)methylamino]-1-(5-phospho-beta-D-ribosyl)imidazole-4-carboxamide. The protein operates within amino-acid biosynthesis; L-histidine biosynthesis; L-histidine from 5-phospho-alpha-D-ribose 1-diphosphate: step 4/9. This Clostridium botulinum (strain Okra / Type B1) protein is 1-(5-phosphoribosyl)-5-[(5-phosphoribosylamino)methylideneamino] imidazole-4-carboxamide isomerase.